Here is a 411-residue protein sequence, read N- to C-terminus: Alpha-1-antitrypsin 1-6 (411 aa).

An N-terminal signal peptide occupies residues 1–25; sequence MTTPFSSHGLLLLVGLCCLLLITKT. Residues Asn-50, Asn-89, Asn-101, and Asn-164 are each glycosylated (N-linked (GlcNAc...) asparagine).

This sequence belongs to the serpin family. In terms of tissue distribution, expressed predominantly in epididymis where it is found in the epithelial cells of the caput, corpus and cauda epididymis.

It localises to the secreted. Its function is as follows. Inhibitor of serine proteases. In Mus musculus (Mouse), this protein is Alpha-1-antitrypsin 1-6.